Here is a 141-residue protein sequence, read N- to C-terminus: ATP synthase epsilon chain (141 aa).

This sequence belongs to the ATPase epsilon chain family. F-type ATPases have 2 components, CF(1) - the catalytic core - and CF(0) - the membrane proton channel. CF(1) has five subunits: alpha(3), beta(3), gamma(1), delta(1), epsilon(1). CF(0) has three main subunits: a, b and c.

It localises to the cell inner membrane. Its function is as follows. Produces ATP from ADP in the presence of a proton gradient across the membrane. The polypeptide is ATP synthase epsilon chain (Hahella chejuensis (strain KCTC 2396)).